A 243-amino-acid polypeptide reads, in one-letter code: LexA repressor 2 (243 aa).

The H-T-H motif DNA-binding region spans 48-68 (IREIGDAVGLTSTSSVAHQLR). Residues S167 and K204 each act as for autocatalytic cleavage activity in the active site.

Belongs to the peptidase S24 family. As to quaternary structure, homodimer.

It carries out the reaction Hydrolysis of Ala-|-Gly bond in repressor LexA.. Represses a number of genes involved in the response to DNA damage (SOS response), including recA and lexA. In the presence of single-stranded DNA, RecA interacts with LexA causing an autocatalytic cleavage which disrupts the DNA-binding part of LexA, leading to derepression of the SOS regulon and eventually DNA repair. The sequence is that of LexA repressor 2 from Nocardia farcinica (strain IFM 10152).